Here is a 290-residue protein sequence, read N- to C-terminus: Protein CREG2 (290 aa).

A signal peptide spans 1 to 31 (MSVRRGRRPARPGTRLSWLLCCSALLSPAAG). 2 N-linked (GlcNAc...) asparagine glycosylation sites follow: Asn-165 and Asn-166.

This sequence belongs to the CREG family. It is not sure whether N-glycosylation is on Asn-165 and/or Asn-166. Brain specific mainly in the limbic system and faintly in the spinal cord but not in cerebellum.

It is found in the secreted. This chain is Protein CREG2 (CREG2), found in Homo sapiens (Human).